An 838-amino-acid polypeptide reads, in one-letter code: Outer membrane usher protein YraJ (838 aa).

A signal peptide spans 1–40; the sequence is MPQRHHQGHKRTPKQLALIIKRCLPMVLTGSGMLCTTANA. Residues Cys815 and Cys837 are joined by a disulfide bond.

The protein belongs to the fimbrial export usher family.

The protein localises to the cell outer membrane. Part of the yraHIJK fimbrial operon. Could contribute to adhesion to various surfaces in specific environmental niches. Increases adhesion to eukaryotic T24 bladder epithelial cells in the absence of fim operon. Probably involved in the export and assembly of fimbrial subunits across the outer membrane. This is Outer membrane usher protein YraJ (yraJ) from Escherichia coli (strain K12).